Here is a 661-residue protein sequence, read N- to C-terminus: 72 kDa type IV collagenase (661 aa).

Residues 1–30 (MTEARVSRGALAALLRALCALGCLLGRAAA) form the signal peptide. Positions 31 to 110 (APSPIIKFPG…PRCGNPDVAN (80 aa)) are cleaved as a propeptide — activation peptide. Positions 101–108 (PRCGNPDV) match the Cysteine switch motif. Residue Cys-103 coordinates Zn(2+). Positions 111-222 (YNFFPRKPKW…LRTLGEGQVV (112 aa)) are collagenase-like 1. 2 residues coordinate Ca(2+): Asp-135 and Asp-169. His-179 and Asp-181 together coordinate Zn(2+). 2 residues coordinate Ca(2+): Asp-186 and Gly-187. Position 194 (His-194) interacts with Zn(2+). Residues Gly-201, Gly-203, and Asp-205 each contribute to the Ca(2+) site. His-207 is a binding site for Zn(2+). Ca(2+)-binding residues include Asp-209, Asp-210, and Glu-212. Residues 223–397 (RVKYGNADGE…WGFCPDQGYS (175 aa)) form a collagen-binding region. 3 Fibronectin type-II domains span residues 229 to 277 (ADGE…FCPH), 287 to 335 (ADGQ…FCPE), and 345 to 393 (SEGA…FCPD). 6 cysteine pairs are disulfide-bonded: Cys-234-Cys-260, Cys-248-Cys-275, Cys-292-Cys-318, Cys-306-Cys-333, Cys-350-Cys-376, and Cys-364-Cys-391. Residues 398-466 (LFLVAAHEFG…GPTPTLGPVT (69 aa)) are collagenase-like 2. Residue His-404 coordinates Zn(2+). Glu-405 is a catalytic residue. The Zn(2+) site is built by His-408 and His-414. The interval 415 to 661 (SQDPGALMAP…GSIKSDWLGC (247 aa)) is required for inhibitor TIMP2 binding. Hemopexin repeat units lie at residues 469 to 517 (LCKQ…WPEL), 518 to 564 (PEKI…GLPP), 566 to 614 (VQKV…WNAI), and 615 to 661 (PDNL…WLGC). Cys-470 and Cys-661 are joined by a disulfide. Residues Asp-477, Asp-522, and Asp-570 each coordinate Ca(2+). Asn-574 carries an N-linked (GlcNAc...) asparagine glycan. Asp-619 contributes to the Ca(2+) binding site. Asn-643 is a glycosylation site (N-linked (GlcNAc...) asparagine).

Belongs to the peptidase M10A family. Interacts (via the C-terminal hemopexin-like domains-containing region) with the integrin alpha-V/beta-3; the interaction promotes vascular invasion in angiogenic vessels and melamoma cells. Interacts (via the C-terminal PEX domain) with TIMP2 (via the C-terminal); the interaction inhibits the degradation activity. Interacts with GSK3B. Ca(2+) is required as a cofactor. Zn(2+) serves as cofactor. Post-translationally, phosphorylation on multiple sites modulates enzymatic activity. Phosphorylated by PKC in vitro. The propeptide is processed by MMP14 (MT-MMP1) and MMP16 (MT-MMP3). Autocatalytic cleavage in the C-terminal produces the anti-angiogenic peptide, PEX. This processing appears to be facilitated by binding integrinv/beta3.

The protein localises to the secreted. It localises to the extracellular space. Its subcellular location is the extracellular matrix. The protein resides in the membrane. It is found in the nucleus. The enzyme catalyses Cleavage of gelatin type I and collagen types IV, V, VII, X. Cleaves the collagen-like sequence Pro-Gln-Gly-|-Ile-Ala-Gly-Gln.. Functionally, ubiquitinous metalloproteinase that is involved in diverse functions such as remodeling of the vasculature, angiogenesis, tissue repair, tumor invasion, inflammation, and atherosclerotic plaque rupture. As well as degrading extracellular matrix proteins, can also act on several nonmatrix proteins such as big endothelial 1 and beta-type CGRP promoting vasoconstriction. Also cleaves KISS at a Gly-|-Leu bond. Appears to have a role in myocardial cell death pathways. Contributes to myocardial oxidative stress by regulating the activity of GSK3beta. Cleaves GSK3beta in vitro. Involved in the formation of the fibrovascular tissues. In terms of biological role, PEX, the C-terminal non-catalytic fragment of MMP2, possesses anti-angiogenic and anti-tumor properties and inhibits cell migration and cell adhesion to FGF2 and vitronectin. Ligand for integrin alpha-v/beta-3 on the surface of blood vessels. This Bos taurus (Bovine) protein is 72 kDa type IV collagenase (MMP2).